The following is a 259-amino-acid chain: Zinc import ATP-binding protein ZnuC (259 aa).

Residues Val22 to His238 form the ABC transporter domain. Residue Gly54–Ser61 coordinates ATP.

Belongs to the ABC transporter superfamily. Zinc importer (TC 3.A.1.15.5) family. As to quaternary structure, the complex is composed of two ATP-binding proteins (ZnuC), two transmembrane proteins (ZnuB) and a solute-binding protein (ZnuA).

The protein resides in the cell inner membrane. The catalysed reaction is Zn(2+)(out) + ATP(in) + H2O(in) = Zn(2+)(in) + ADP(in) + phosphate(in) + H(+)(in). Part of the ABC transporter complex ZnuABC involved in zinc import. Responsible for energy coupling to the transport system. This Alkalilimnicola ehrlichii (strain ATCC BAA-1101 / DSM 17681 / MLHE-1) protein is Zinc import ATP-binding protein ZnuC.